A 291-amino-acid chain; its full sequence is Homeobox protein SIX2 (291 aa).

Residues 124 to 183 constitute a DNA-binding region (homeobox); sequence GEETSYCFKEKSRSVLREWYAHNPYPSPREKRELAEATGLTTTQVSNWFKNRRQRDRAAE. Positions 168–279 are disordered; it reads VSNWFKNRRQ…HHHGLQDSIL (112 aa). Basic and acidic residues predominate over residues 179-190; that stretch reads DRAAEAKERENN. The segment covering 224-233 has biased composition (low complexity); sequence HSSSSPALLL. Positions 249–259 are enriched in pro residues; that stretch reads PPGPSAVPVPV.

It belongs to the SIX/Sine oculis homeobox family. Interacts with TCF7L2; in a canonical Wnt signaling independent manner; prevents transcription of differentiation genes in cap mesenchyme. Interacts with OSR1; form a strong repressor complex with TCF7L2, TLE2 and TLE3 to prevent the activation of Wnt/beta-catenin target genes in the cap mesenchyme. Interacts with HOXA11, EYA1 and EYA3. Strongly expressed in skeletal muscle. Expressed in Wilms' tumor and in the cap mesenchyme of fetal kidney (at protein level).

The protein localises to the nucleus. In terms of biological role, transcription factor that plays an important role in the development of several organs, including kidney, skull and stomach. During kidney development, maintains cap mesenchyme multipotent nephron progenitor cells in an undifferentiated state by opposing the inductive signals emanating from the ureteric bud and cooperates with WNT9B to promote renewing progenitor cells proliferation. Acts through its interaction with TCF7L2 and OSR1 in a canonical Wnt signaling independent manner preventing transcription of differentiation genes in cap mesenchyme such as WNT4. Also acts independently of OSR1 to activate expression of many cap mesenchyme genes, including itself, GDNF and OSR1. During craniofacial development plays a role in growth and elongation of the cranial base through regulation of chondrocyte differentiation. During stomach organogenesis, controls pyloric sphincter formation and mucosal growth through regulation of a gene network including NKX2-5, BMPR1B, BMP4, SOX9 and GREM1. During branchial arch development, acts to mediate HOXA2 control over the insulin-like growth factor pathway. May also be involved in limb tendon and ligament development. Plays a role in cell proliferation and migration. The chain is Homeobox protein SIX2 (SIX2) from Homo sapiens (Human).